The sequence spans 72 residues: MAKQSAIEKDGVIVEALSNAMFRVELENGHEITAHISGKMRMHYIKILPGDKVRVEMSPYDLSKGRIAFRYK.

The 72-residue stretch at 1 to 72 (MAKQSAIEKD…SKGRIAFRYK (72 aa)) folds into the S1-like domain.

Belongs to the IF-1 family. Component of the 30S ribosomal translation pre-initiation complex which assembles on the 30S ribosome in the order IF-2 and IF-3, IF-1 and N-formylmethionyl-tRNA(fMet); mRNA recruitment can occur at any time during PIC assembly.

Its subcellular location is the cytoplasm. One of the essential components for the initiation of protein synthesis. Stabilizes the binding of IF-2 and IF-3 on the 30S subunit to which N-formylmethionyl-tRNA(fMet) subsequently binds. Helps modulate mRNA selection, yielding the 30S pre-initiation complex (PIC). Upon addition of the 50S ribosomal subunit IF-1, IF-2 and IF-3 are released leaving the mature 70S translation initiation complex. This Parabacteroides distasonis (strain ATCC 8503 / DSM 20701 / CIP 104284 / JCM 5825 / NCTC 11152) protein is Translation initiation factor IF-1.